Here is a 382-residue protein sequence, read N- to C-terminus: Putative glutamate--cysteine ligase 2-1 (382 aa).

It belongs to the glutamate--cysteine ligase type 2 family. YbdK subfamily.

The catalysed reaction is L-cysteine + L-glutamate + ATP = gamma-L-glutamyl-L-cysteine + ADP + phosphate + H(+). Functionally, ATP-dependent carboxylate-amine ligase which exhibits weak glutamate--cysteine ligase activity. The chain is Putative glutamate--cysteine ligase 2-1 from Frankia casuarinae (strain DSM 45818 / CECT 9043 / HFP020203 / CcI3).